The chain runs to 121 residues: Small ribosomal subunit protein bS16 (121 aa).

The segment at Ala80–Glu121 is disordered. Basic and acidic residues-rich tracts occupy residues Gly81 to Asn90 and Lys99 to Lys110.

Belongs to the bacterial ribosomal protein bS16 family.

The sequence is that of Small ribosomal subunit protein bS16 from Ruegeria sp. (strain TM1040) (Silicibacter sp.).